A 444-amino-acid chain; its full sequence is MHILVVSVNYRTAPVEFREKLTFQAAELERAMTTLQNQKSVLENVIVSTCNRTEIYAVVDQLHTGRYYIKKFLADWFQLEIEEVAPYLTIFEQDGAIDHLFRVTCGLDSMVVGETQILGQIKDSFLEAQQVKATGTIFNELFKQVITLAKRAHSETTIGESAMSVSYAAVELGKKIFGELTDCHVLILGAGKMGELALQNLYGSGARKVTVMNRTLSKAEVMAEKYMGHAKSLSELQCALLEADILISSTGASEYVITKEMMTKVEKMRSGRPLFMVDIAVPRDIDPAIDELEGSFLYDIDDLQGVVEANRAERLKEAEKIQFMIEEEIVLFKTWLSTLGVVPLISALRDKALAIQSETMVSLERKIPNLSDREKKVISKHTKSIINQLLKDPILVAKEIAAEEGASEKLALFAKIFDLETEEVESRAEEVEHKRVWTPSVPSL.

Substrate contacts are provided by residues Thr49–Arg52, Ser109, Glu114–Gln116, and Gln120. Cys50 acts as the Nucleophile in catalysis. An NADP(+)-binding site is contributed by Gly189–Gly194.

It belongs to the glutamyl-tRNA reductase family. As to quaternary structure, homodimer.

It catalyses the reaction (S)-4-amino-5-oxopentanoate + tRNA(Glu) + NADP(+) = L-glutamyl-tRNA(Glu) + NADPH + H(+). It participates in porphyrin-containing compound metabolism; protoporphyrin-IX biosynthesis; 5-aminolevulinate from L-glutamyl-tRNA(Glu): step 1/2. Functionally, catalyzes the NADPH-dependent reduction of glutamyl-tRNA(Glu) to glutamate 1-semialdehyde (GSA). This chain is Glutamyl-tRNA reductase, found in Bacillus cereus (strain G9842).